The chain runs to 534 residues: Cytidylyl-2-hydroxyethylphosphonate methyltransferase (534 aa).

In terms of domain architecture, B12-binding spans 38–195 (KVLLLNPSAT…EHLNGNVSDD (158 aa)). Positions 268–496 (TVGSRVGQLY…TYKQGIINVP (229 aa)) constitute a Radical SAM core domain. 3 residues coordinate [4Fe-4S] cluster: Cys-282, Cys-286, and Cys-289.

This sequence belongs to the radical SAM superfamily. [4Fe-4S] cluster serves as cofactor. The cofactor is methylcob(III)alamin.

It catalyses the reaction cytidine 5'-{[hydroxy(2-hydroxyethyl)phosphonoyl]phosphate} + AH2 + 2 S-adenosyl-L-methionine = cytidine 5'-({hydroxy[(S)-2-hydroxypropyl]phosphonoyl}phosphate) + 5'-deoxyadenosine + L-methionine + A + S-adenosyl-L-homocysteine + 2 H(+). It functions in the pathway antibiotic biosynthesis; fosfomycin biosynthesis. Its function is as follows. Involved in fosfomycin biosynthesis. Catalyzes the C-methylation of cytidylyl-2-hydroxyethylphosphonate (HEP-CMP) to form cytidylyl-2-hydroxypropylphosphonate (HPP-CMP). The C-methylation is not stereoselective and the ratio of (S)- to (R)-HPP-CMP is almost equal in vitro. The sequence is that of Cytidylyl-2-hydroxyethylphosphonate methyltransferase from Streptomyces wedmorensis.